Consider the following 438-residue polypeptide: uncharacterized protein (438 aa).

The signal sequence occupies residues 1-20 (MNTRLALVLCAVGSGVLSFS). A lipid anchor (N-palmitoyl cysteine) is attached at Cys21. Cys21 carries the S-diacylglycerol cysteine lipid modification.

It is found in the cell membrane. This is an uncharacterized protein from Treponema pallidum (strain Nichols).